Reading from the N-terminus, the 513-residue chain is Ribonuclease Y (513 aa).

The chain crosses the membrane as a helical span at residues 6–26; that stretch reads YIIIAVVIIIICVILGLYVVD. Residues 203–288 enclose the KH domain; that stretch reads TVHVVNLPND…EMVEKAKKEV (86 aa). The HD domain maps to 329–422; it reads VLKHSIEVSH…VQAADAISAA (94 aa).

The protein belongs to the RNase Y family.

It localises to the cell membrane. Functionally, endoribonuclease that initiates mRNA decay. The sequence is that of Ribonuclease Y from Clostridium botulinum (strain Langeland / NCTC 10281 / Type F).